The primary structure comprises 175 residues: RNA pyrophosphohydrolase (175 aa).

Positions 6–149 constitute a Nudix hydrolase domain; sequence GYRPNVGIVI…KRDVYRRVMK (144 aa). Residues 38–59 carry the Nudix box motif; sequence GGINAGETAEQAMYRELFEEVG.

The protein belongs to the Nudix hydrolase family. RppH subfamily. The cofactor is a divalent metal cation.

Functionally, accelerates the degradation of transcripts by removing pyrophosphate from the 5'-end of triphosphorylated RNA, leading to a more labile monophosphorylated state that can stimulate subsequent ribonuclease cleavage. The polypeptide is RNA pyrophosphohydrolase (Sodalis glossinidius (strain morsitans)).